A 64-amino-acid chain; its full sequence is Large ribosomal subunit protein bL33m (64 aa).

This sequence belongs to the bacterial ribosomal protein bL33 family. As to quaternary structure, component of the mitochondrial ribosome large subunit (39S) which comprises a 16S rRNA and about 50 distinct proteins.

Its subcellular location is the mitochondrion. The chain is Large ribosomal subunit protein bL33m (mRpL33) from Drosophila melanogaster (Fruit fly).